The primary structure comprises 267 residues: Indole-3-glycerol phosphate synthase 1 (267 aa).

The protein belongs to the TrpC family.

The catalysed reaction is 1-(2-carboxyphenylamino)-1-deoxy-D-ribulose 5-phosphate + H(+) = (1S,2R)-1-C-(indol-3-yl)glycerol 3-phosphate + CO2 + H2O. Its pathway is amino-acid biosynthesis; L-tryptophan biosynthesis; L-tryptophan from chorismate: step 4/5. In Ralstonia nicotianae (strain ATCC BAA-1114 / GMI1000) (Ralstonia solanacearum), this protein is Indole-3-glycerol phosphate synthase 1 (trpC1).